The following is a 182-amino-acid chain: Protein GrpE (182 aa).

Residues Met-1–Glu-17 show a composition bias toward basic and acidic residues. The interval Met-1–Val-33 is disordered.

The protein belongs to the GrpE family. In terms of assembly, homodimer.

The protein localises to the cytoplasm. Its function is as follows. Participates actively in the response to hyperosmotic and heat shock by preventing the aggregation of stress-denatured proteins, in association with DnaK and GrpE. It is the nucleotide exchange factor for DnaK and may function as a thermosensor. Unfolded proteins bind initially to DnaJ; upon interaction with the DnaJ-bound protein, DnaK hydrolyzes its bound ATP, resulting in the formation of a stable complex. GrpE releases ADP from DnaK; ATP binding to DnaK triggers the release of the substrate protein, thus completing the reaction cycle. Several rounds of ATP-dependent interactions between DnaJ, DnaK and GrpE are required for fully efficient folding. The chain is Protein GrpE from Borrelia hermsii (strain HS1 / DAH).